The primary structure comprises 566 residues: 5'-AMP-activated protein kinase subunit gamma-2 (566 aa).

The tract at residues 1-198 (MGSAAMDTKK…SRIYASSSPP (198 aa)) is disordered. Residues 15-25 (SSPGGSSGKKN) show a composition bias toward low complexity. A compositionally biased stretch (basic and acidic residues) spans 54–64 (NSEKHSSRKVD). Phosphoserine occurs at positions 65, 71, 73, 90, 138, 143, 158, 161, and 162. Low complexity-rich tracts occupy residues 132–144 (KESS…STSP) and 156–172 (TSSV…VTKQ). T165 is modified (phosphothreonine). Basic and acidic residues predominate over residues 180 to 189 (YKQEPERPES). Phosphoserine is present on S196. CBS domains follow at residues 272-332 (PTSS…KSPM), 354-412 (TFKP…MSDM), and 427-489 (IGTY…NLDI). ADP-binding positions include R299, 314–319 (MLTITD), V359, 380–381 (HR), and K399. AMP is bound by residues R299, 314–319 (MLTITD), V359, H380, 380–381 (HR), K399, T429, A434, 455–456 (SA), 471–474 (SKFD), R498, H527, 527–528 (HR), and 543–546 (SLSD). Residues R299, 314–319 (MLTITD), V359, 380–381 (HR), R381, and K399 contribute to the ATP site. Residues 367–388 (LFDAVYSLIKNKIHRLPVIDPI) carry the AMPK pseudosubstrate motif. Residues 471 to 474 (SKFD), R498, and 527 to 528 (HR) each bind ADP. ATP is bound by residues 471-474 (SKFD), R498, and 527-528 (HR). Residues 501–559 (YFEGVVKCSKLETLETIVDRIVRAEVHRLVVVNEADSIVGIISLSDILQALILTPAGAK) form the CBS 4 domain.

The protein belongs to the 5'-AMP-activated protein kinase gamma subunit family. In terms of assembly, AMPK is a heterotrimer of an alpha catalytic subunit (PRKAA1 or PRKAA2), a beta (PRKAB1 or PRKAB2) and a gamma non-catalytic subunits (PRKAG1, PRKAG2 or PRKAG3). Interacts with FNIP1 and FNIP2. Post-translationally, phosphorylated by ULK1; leading to negatively regulate AMPK activity and suggesting the existence of a regulatory feedback loop between ULK1 and AMPK. Glycosylated; O-GlcNAcylated by OGT, promoting the AMP-activated protein kinase (AMPK) activity.

In terms of biological role, AMP/ATP-binding subunit of AMP-activated protein kinase (AMPK), an energy sensor protein kinase that plays a key role in regulating cellular energy metabolism. In response to reduction of intracellular ATP levels, AMPK activates energy-producing pathways and inhibits energy-consuming processes: inhibits protein, carbohydrate and lipid biosynthesis, as well as cell growth and proliferation. AMPK acts via direct phosphorylation of metabolic enzymes, and by longer-term effects via phosphorylation of transcription regulators. Also acts as a regulator of cellular polarity by remodeling the actin cytoskeleton; probably by indirectly activating myosin. Gamma non-catalytic subunit mediates binding to AMP, ADP and ATP, leading to activate or inhibit AMPK: AMP-binding results in allosteric activation of alpha catalytic subunit (PRKAA1 or PRKAA2) both by inducing phosphorylation and preventing dephosphorylation of catalytic subunits. ADP also stimulates phosphorylation, without stimulating already phosphorylated catalytic subunit. ATP promotes dephosphorylation of catalytic subunit, rendering the AMPK enzyme inactive. The polypeptide is 5'-AMP-activated protein kinase subunit gamma-2 (Prkag2) (Mus musculus (Mouse)).